The sequence spans 400 residues: S-adenosylmethionine synthase (400 aa).

137 to 142 (GEGSGD) lines the ATP pocket.

This sequence belongs to the AdoMet synthase 2 family. Mg(2+) serves as cofactor.

It carries out the reaction L-methionine + ATP + H2O = S-adenosyl-L-methionine + phosphate + diphosphate. It participates in amino-acid biosynthesis; S-adenosyl-L-methionine biosynthesis; S-adenosyl-L-methionine from L-methionine: step 1/1. Functionally, catalyzes the formation of S-adenosylmethionine from methionine and ATP. The chain is S-adenosylmethionine synthase from Haloarcula marismortui (strain ATCC 43049 / DSM 3752 / JCM 8966 / VKM B-1809) (Halobacterium marismortui).